We begin with the raw amino-acid sequence, 3919 residues long: Intermembrane lipid transfer protein Vps13D (3919 aa).

A Chorein N-terminal domain is found at 4-114 (DLITWVLNTY…QDLEYKLAVL (111 aa)). Residues 706-736 (TSDDDETYLTPCSTPPASEKSGSESPTLLEN) form a disordered region. Residues 2292 to 2334 (KADSDLEKAAPLVAMGFEISDCLYAMQINNWRINDAAIWLSQQ) enclose the UBA domain. One can recognise an SHR-BD domain in the interval 2837-3113 (ELYISAPVWI…YVMDDPLGQQ (277 aa)). Residues 3749 to 3768 (VRETSRDSHRNAPERKRLPR) are disordered. Residues 3751–3764 (ETSRDSHRNAPERK) are compositionally biased toward basic and acidic residues.

It belongs to the VPS13 family. In terms of tissue distribution, expressed in intestinal cells (at protein level).

It localises to the cytoplasm. It is found in the lysosome. Functionally, mediates the transfer of lipids between membranes at organelle contact sites. Functions in promoting mitochondrial clearance by mitochondrial autophagy (mitophagy), also possibly by positively regulating mitochondrial fission. Mitophagy plays an important role in regulating cell health and mitochondrial size and homeostasis. This chain is Intermembrane lipid transfer protein Vps13D, found in Drosophila melanogaster (Fruit fly).